The chain runs to 145 residues: Anaerobic nitrite reductase NSHB5 (145 aa).

Positions 2 to 142 (GFSETQEELV…LAAAIKEEMK (141 aa)) constitute a Globin domain. A Homodimerization motif is present at residues 35–39 (EIAPA). Heme b is bound by residues Ser45, His59, Lys61, Arg84, Thr88, and His89. A Homodimerization motif is present at residues 96 to 108 (DAHFEVVKTALLD).

The protein belongs to the plant globin family. As to quaternary structure, homodimer. The cofactor is heme b. In terms of tissue distribution, expressed in embryonic (embryos, coleoptiles and seminal roots) and vegetative (leaves and roots) organs.

It is found in the cytoplasm. It localises to the nucleus. The enzyme catalyses Fe(III)-heme b-[protein] + nitric oxide + H2O = Fe(II)-heme b-[protein] + nitrite + 2 H(+). In terms of biological role, phytoglobin that reduces nitrite to nitric oxide under anoxic conditions (e.g. during flooding or in waterlogged soil). May not function as an oxygen storage or transport protein. Has an unusually high affinity for O(2) through an hexacoordinate heme iron because of a very low dissociation constant. The sequence is that of Anaerobic nitrite reductase NSHB5 from Oryza sativa subsp. indica (Rice).